The chain runs to 233 residues: Probable septum site-determining protein MinC (233 aa).

It belongs to the MinC family. Interacts with MinD and FtsZ.

Its function is as follows. Cell division inhibitor that blocks the formation of polar Z ring septums. Rapidly oscillates between the poles of the cell to destabilize FtsZ filaments that have formed before they mature into polar Z rings. Prevents FtsZ polymerization. The polypeptide is Probable septum site-determining protein MinC (Proteus mirabilis (strain HI4320)).